A 464-amino-acid polypeptide reads, in one-letter code: GTPase Der (464 aa).

EngA-type G domains follow at residues 3–166 (PVIA…PEVE) and 178–351 (IRIA…DSAF). GTP is bound by residues 9-16 (GRPNVGKS), 56-60 (DTGGL), 118-121 (NKTD), 184-191 (GRPNAGKS), 231-235 (DTAGV), and 296-299 (NKWD). Positions 352-436 (IKVSTNHLTK…PIRLEFKTGE (85 aa)) constitute a KH-like domain.

Belongs to the TRAFAC class TrmE-Era-EngA-EngB-Septin-like GTPase superfamily. EngA (Der) GTPase family. As to quaternary structure, associates with the 50S ribosomal subunit.

Its function is as follows. GTPase that plays an essential role in the late steps of ribosome biogenesis. The sequence is that of GTPase Der from Thioalkalivibrio sulfidiphilus (strain HL-EbGR7).